A 191-amino-acid chain; its full sequence is Adenine phosphoribosyltransferase (191 aa).

Belongs to the purine/pyrimidine phosphoribosyltransferase family. As to quaternary structure, homodimer.

It localises to the cytoplasm. It carries out the reaction AMP + diphosphate = 5-phospho-alpha-D-ribose 1-diphosphate + adenine. It participates in purine metabolism; AMP biosynthesis via salvage pathway; AMP from adenine: step 1/1. Its function is as follows. Catalyzes a salvage reaction resulting in the formation of AMP, that is energically less costly than de novo synthesis. In Nocardia farcinica (strain IFM 10152), this protein is Adenine phosphoribosyltransferase.